Here is a 518-residue protein sequence, read N- to C-terminus: Bifunctional purine biosynthesis protein PurH (518 aa).

An MGS-like domain is found at 1–144 (MNRRAVLSVS…KNQERVSIVV (144 aa)).

It belongs to the PurH family.

It carries out the reaction (6R)-10-formyltetrahydrofolate + 5-amino-1-(5-phospho-beta-D-ribosyl)imidazole-4-carboxamide = 5-formamido-1-(5-phospho-D-ribosyl)imidazole-4-carboxamide + (6S)-5,6,7,8-tetrahydrofolate. The catalysed reaction is IMP + H2O = 5-formamido-1-(5-phospho-D-ribosyl)imidazole-4-carboxamide. It functions in the pathway purine metabolism; IMP biosynthesis via de novo pathway; 5-formamido-1-(5-phospho-D-ribosyl)imidazole-4-carboxamide from 5-amino-1-(5-phospho-D-ribosyl)imidazole-4-carboxamide (10-formyl THF route): step 1/1. It participates in purine metabolism; IMP biosynthesis via de novo pathway; IMP from 5-formamido-1-(5-phospho-D-ribosyl)imidazole-4-carboxamide: step 1/1. The chain is Bifunctional purine biosynthesis protein PurH from Desulfitobacterium hafniense (strain DSM 10664 / DCB-2).